The following is a 200-amino-acid chain: Imidazole glycerol phosphate synthase subunit HisH (200 aa).

Residues 3–200 (DVALIDAGGA…LHNFLEMSFP (198 aa)) enclose the Glutamine amidotransferase type-1 domain. The active-site Nucleophile is the C78. Active-site residues include H179 and E181.

Heterodimer of HisH and HisF.

The protein localises to the cytoplasm. It carries out the reaction 5-[(5-phospho-1-deoxy-D-ribulos-1-ylimino)methylamino]-1-(5-phospho-beta-D-ribosyl)imidazole-4-carboxamide + L-glutamine = D-erythro-1-(imidazol-4-yl)glycerol 3-phosphate + 5-amino-1-(5-phospho-beta-D-ribosyl)imidazole-4-carboxamide + L-glutamate + H(+). It catalyses the reaction L-glutamine + H2O = L-glutamate + NH4(+). The protein operates within amino-acid biosynthesis; L-histidine biosynthesis; L-histidine from 5-phospho-alpha-D-ribose 1-diphosphate: step 5/9. Its function is as follows. IGPS catalyzes the conversion of PRFAR and glutamine to IGP, AICAR and glutamate. The HisH subunit catalyzes the hydrolysis of glutamine to glutamate and ammonia as part of the synthesis of IGP and AICAR. The resulting ammonia molecule is channeled to the active site of HisF. This is Imidazole glycerol phosphate synthase subunit HisH from Xanthomonas oryzae pv. oryzae (strain MAFF 311018).